Reading from the N-terminus, the 83-residue chain is Putative cytochrome b5 B11H24.095 (83 aa).

Residues 2-78 (SQTFTKSQVA…GTKLKVGTLA (77 aa)) form the Cytochrome b5 heme-binding domain. The heme site is built by His-37 and His-60.

Belongs to the cytochrome b5 family.

In Neurospora crassa (strain ATCC 24698 / 74-OR23-1A / CBS 708.71 / DSM 1257 / FGSC 987), this protein is Putative cytochrome b5 B11H24.095.